The following is a 394-amino-acid chain: Formate-dependent phosphoribosylglycinamide formyltransferase (394 aa).

N(1)-(5-phospho-beta-D-ribosyl)glycinamide-binding positions include 22-23 (EL) and Glu82. ATP is bound by residues Arg114, Lys155, 160-165 (SSGKGQ), 195-198 (EGFV), and Glu203. In terms of domain architecture, ATP-grasp spans 119–308 (RLAAETLKLP…EFALHVRAIL (190 aa)). Mg(2+) contacts are provided by Glu267 and Glu279. N(1)-(5-phospho-beta-D-ribosyl)glycinamide-binding positions include Asp286, Lys357, and 364–365 (RR).

Belongs to the PurK/PurT family. In terms of assembly, homodimer.

The catalysed reaction is N(1)-(5-phospho-beta-D-ribosyl)glycinamide + formate + ATP = N(2)-formyl-N(1)-(5-phospho-beta-D-ribosyl)glycinamide + ADP + phosphate + H(+). It functions in the pathway purine metabolism; IMP biosynthesis via de novo pathway; N(2)-formyl-N(1)-(5-phospho-D-ribosyl)glycinamide from N(1)-(5-phospho-D-ribosyl)glycinamide (formate route): step 1/1. Involved in the de novo purine biosynthesis. Catalyzes the transfer of formate to 5-phospho-ribosyl-glycinamide (GAR), producing 5-phospho-ribosyl-N-formylglycinamide (FGAR). Formate is provided by PurU via hydrolysis of 10-formyl-tetrahydrofolate. The chain is Formate-dependent phosphoribosylglycinamide formyltransferase from Tolumonas auensis (strain DSM 9187 / NBRC 110442 / TA 4).